Reading from the N-terminus, the 861-residue chain is APC membrane recruitment protein 3 (861 aa).

8 disordered regions span residues 1 to 77, 179 to 206, 261 to 289, 351 to 415, 514 to 558, 576 to 644, 716 to 742, and 786 to 822; these read MELK…PKGG, AEGKSLPSPGDPSDPGGRRSKAFLPPGE, PSLELNEGPESPTQAAQGLESKVPRGPLQ, PLCP…FPRD, RGPT…GGAT, GLLA…SQKE, MLEQKQSSSSPSMTTIHGLPYSASTQD, and AHGSQLDSEPRSAPAARWSSQGHHPESLGLTLNSQQE. Positions 362–384 are enriched in polar residues; sequence SKASSIDTGTPKSEQPESVSTSD. Pro residues predominate over residues 518–530; it reads PRAPPTPGQPAAP. Residues 584–595 are compositionally biased toward low complexity; that stretch reads ALGGATQGTGTL. Over residues 598-609 the composition is skewed to basic and acidic residues; that stretch reads DASREEETRGHS. Polar residues-rich tracts occupy residues 615 to 629 and 719 to 730; these read SMESAATSTTDTSGK and QKQSSSSPSMTT.

Belongs to the Amer family.

The protein resides in the cell membrane. Its function is as follows. Regulator of the canonical Wnt signaling pathway. Acts by specifically binding phosphatidylinositol 4,5-bisphosphate (PtdIns(4,5)P2), translocating to the cell membrane. The chain is APC membrane recruitment protein 3 (AMER3) from Homo sapiens (Human).